We begin with the raw amino-acid sequence, 729 residues long: Fatty acid oxidation complex subunit alpha (729 aa).

The tract at residues 1 to 189 (MLYKGDTLYL…KIGLVDGVVK (189 aa)) is enoyl-CoA hydratase/isomerase. Asp-296 contributes to the substrate binding site. The tract at residues 311–729 (ETPKQAAVLG…ARPVGSLKTA (419 aa)) is 3-hydroxyacyl-CoA dehydrogenase. NAD(+) is bound by residues Met-324, Asp-343, 400-402 (VVE), Lys-407, and Ser-429. The active-site For 3-hydroxyacyl-CoA dehydrogenase activity is His-450. Asn-453 contributes to the NAD(+) binding site. Substrate-binding residues include Asn-500 and Tyr-660. Residues 707 to 729 (TRHNEPYYPPVEPARPVGSLKTA) form a disordered region.

This sequence in the N-terminal section; belongs to the enoyl-CoA hydratase/isomerase family. It in the C-terminal section; belongs to the 3-hydroxyacyl-CoA dehydrogenase family. As to quaternary structure, heterotetramer of two alpha chains (FadB) and two beta chains (FadA).

The enzyme catalyses a (3S)-3-hydroxyacyl-CoA + NAD(+) = a 3-oxoacyl-CoA + NADH + H(+). It carries out the reaction a (3S)-3-hydroxyacyl-CoA = a (2E)-enoyl-CoA + H2O. The catalysed reaction is a 4-saturated-(3S)-3-hydroxyacyl-CoA = a (3E)-enoyl-CoA + H2O. It catalyses the reaction (3S)-3-hydroxybutanoyl-CoA = (3R)-3-hydroxybutanoyl-CoA. The enzyme catalyses a (3Z)-enoyl-CoA = a 4-saturated (2E)-enoyl-CoA. It carries out the reaction a (3E)-enoyl-CoA = a 4-saturated (2E)-enoyl-CoA. It functions in the pathway lipid metabolism; fatty acid beta-oxidation. In terms of biological role, involved in the aerobic and anaerobic degradation of long-chain fatty acids via beta-oxidation cycle. Catalyzes the formation of 3-oxoacyl-CoA from enoyl-CoA via L-3-hydroxyacyl-CoA. It can also use D-3-hydroxyacyl-CoA and cis-3-enoyl-CoA as substrate. This chain is Fatty acid oxidation complex subunit alpha, found in Salmonella typhi.